A 257-amino-acid chain; its full sequence is DNA repair protein RecO (257 aa).

This sequence belongs to the RecO family.

In terms of biological role, involved in DNA repair and RecF pathway recombination. In Streptococcus sanguinis (strain SK36), this protein is DNA repair protein RecO.